Consider the following 139-residue polypeptide: Protein GOS9 (139 aa).

One can recognise a Jacalin-type lectin domain in the interval 5 to 139; it reads LVKIGTWGGN…VDSIGVYVHI (135 aa).

As to expression, expressed mainly in roots.

The protein is Protein GOS9 (GOS9) of Oryza sativa subsp. indica (Rice).